Reading from the N-terminus, the 564-residue chain is Alpha-amylase 3 (564 aa).

The N-terminal stretch at 1 to 21 (MFGVYFVLLFLSSALIHVANA) is a signal peptide. The cysteines at positions 51 and 59 are disulfide-linked. N56 and W105 together coordinate substrate. N143 contributes to the Ca(2+) binding site. A disulfide bond links C172 and C188. N-linked (GlcNAc...) asparagine glycosylation occurs at N181. Ca(2+) is bound at residue D198. R227 is a binding site for substrate. Ca(2+) is bound at residue D229. D229 acts as the Nucleophile in catalysis. A substrate-binding site is contributed by 232-233 (KM). N235 carries an N-linked (GlcNAc...) asparagine glycan. E253 is a binding site for Ca(2+). Catalysis depends on E253, which acts as the Proton donor. C263 and C306 are joined by a disulfide. Residues N282 and N305 are each glycosylated (N-linked (GlcNAc...) asparagine). Positions 322 and 369 each coordinate substrate. N-linked (GlcNAc...) asparagine glycosylation is found at N438, N447, and N498. Residue S538 is the site of GPI-anchor amidated serine attachment. Residues 539–564 (SSRLILSFKTLVFGLGVTAMLFVLFF) constitute a propeptide, removed in mature form.

The protein belongs to the glycosyl hydrolase 13 family. Ca(2+) is required as a cofactor. Post-translationally, N-glycosylated.

Its subcellular location is the cell membrane. It catalyses the reaction Endohydrolysis of (1-&gt;4)-alpha-D-glucosidic linkages in polysaccharides containing three or more (1-&gt;4)-alpha-linked D-glucose units.. In terms of biological role, has a role in cell wall biosynthesis where it is involved in maintaining cell wall strength and shape. This chain is Alpha-amylase 3 (aah3), found in Schizosaccharomyces pombe (strain 972 / ATCC 24843) (Fission yeast).